The chain runs to 130 residues: Small ribosomal subunit protein uS9 (130 aa).

The segment at 105–130 (TRDSRMVERKKPGLKKARRASQFSKR) is disordered. Positions 106–115 (RDSRMVERKK) are enriched in basic and acidic residues. Residues 116-130 (PGLKKARRASQFSKR) are compositionally biased toward basic residues.

It belongs to the universal ribosomal protein uS9 family.

In Oenococcus oeni (strain ATCC BAA-331 / PSU-1), this protein is Small ribosomal subunit protein uS9.